The chain runs to 542 residues: CTP synthase (542 aa).

The segment at 1–265 (MARYVFITGG…DSEVLAAFGI (265 aa)) is amidoligase domain. Residue Ser13 coordinates CTP. Ser13 contributes to the UTP binding site. 14–19 (SLGKGI) is an ATP binding site. Tyr54 serves as a coordination point for L-glutamine. Asp71 is an ATP binding site. Residues Asp71 and Glu139 each coordinate Mg(2+). CTP contacts are provided by residues 146–148 (DIE), 186–191 (KTKPTQ), and Lys222. Residues 186–191 (KTKPTQ) and Lys222 each bind UTP. A Glutamine amidotransferase type-1 domain is found at 291–541 (TIAIVGKYTG…IAAAVEQSRL (251 aa)). Gly353 serves as a coordination point for L-glutamine. The active-site Nucleophile; for glutamine hydrolysis is the Cys380. L-glutamine contacts are provided by residues 381–384 (FGMQ), Glu404, and Arg469. Active-site residues include His514 and Glu516.

It belongs to the CTP synthase family. In terms of assembly, homotetramer.

It carries out the reaction UTP + L-glutamine + ATP + H2O = CTP + L-glutamate + ADP + phosphate + 2 H(+). It catalyses the reaction L-glutamine + H2O = L-glutamate + NH4(+). The enzyme catalyses UTP + NH4(+) + ATP = CTP + ADP + phosphate + 2 H(+). Its pathway is pyrimidine metabolism; CTP biosynthesis via de novo pathway; CTP from UDP: step 2/2. Its activity is regulated as follows. Allosterically activated by GTP, when glutamine is the substrate; GTP has no effect on the reaction when ammonia is the substrate. The allosteric effector GTP functions by stabilizing the protein conformation that binds the tetrahedral intermediate(s) formed during glutamine hydrolysis. Inhibited by the product CTP, via allosteric rather than competitive inhibition. Functionally, catalyzes the ATP-dependent amination of UTP to CTP with either L-glutamine or ammonia as the source of nitrogen. Regulates intracellular CTP levels through interactions with the four ribonucleotide triphosphates. The chain is CTP synthase from Chelativorans sp. (strain BNC1).